The primary structure comprises 215 residues: Probable phosphoglycerate mutase GpmB (215 aa).

Substrate contacts are provided by residues 8–15 (RHGETQWN), 21–22 (QG), arginine 58, arginine 60, 82–85 (ELNM), 104–105 (RR), and 151–152 (GI). The Tele-phosphohistidine intermediate role is filled by histidine 9. Catalysis depends on glutamate 82, which acts as the Proton donor/acceptor.

Belongs to the phosphoglycerate mutase family. GpmB subfamily.

The enzyme catalyses (2R)-2-phosphoglycerate = (2R)-3-phosphoglycerate. The protein operates within carbohydrate degradation; glycolysis; pyruvate from D-glyceraldehyde 3-phosphate: step 3/5. The polypeptide is Probable phosphoglycerate mutase GpmB (Escherichia coli O9:H4 (strain HS)).